Here is a 376-residue protein sequence, read N- to C-terminus: N-acetyldiaminopimelate deacetylase (376 aa).

Residue D69 is part of the active site. E128 serves as the catalytic Proton acceptor.

Belongs to the peptidase M20A family. N-acetyldiaminopimelate deacetylase subfamily.

The enzyme catalyses N-acetyl-(2S,6S)-2,6-diaminopimelate + H2O = (2S,6S)-2,6-diaminopimelate + acetate. The protein operates within amino-acid biosynthesis; L-lysine biosynthesis via DAP pathway; LL-2,6-diaminopimelate from (S)-tetrahydrodipicolinate (acetylase route): step 3/3. Catalyzes the conversion of N-acetyl-diaminopimelate to diaminopimelate and acetate. In Bacillus thuringiensis subsp. konkukian (strain 97-27), this protein is N-acetyldiaminopimelate deacetylase.